Consider the following 305-residue polypeptide: Alpha-N-acetylgalactosaminide alpha-2,6-sialyltransferase 3 (305 aa).

At 1-8 (MACILKRK) the chain is on the cytoplasmic side. Residues 9–29 (PALAVSFIALCILLLAMRLAN) traverse the membrane as a helical; Signal-anchor for type II membrane protein segment. Residues 30–305 (DVTFPLLLNC…VFTHPNWTVS (276 aa)) lie on the Lumenal side of the membrane. Cysteines 80 and 229 form a disulfide. N-linked (GlcNAc...) asparagine glycosylation is found at N239 and N301.

The protein belongs to the glycosyltransferase 29 family. As to expression, in adults it is highly expressed in spleen, followed by kidney and lesser in lung. Not found in liver and skeletal muscle. In newborns it is abundantly expressed in brain and kidney.

Its subcellular location is the golgi apparatus membrane. It carries out the reaction an alpha-Neu5Ac-(2-&gt;3)-beta-D-Gal-(1-&gt;3)-D-GlcNAc derivative + CMP-N-acetyl-beta-neuraminate = an alpha-Neu5Ac-(2-&gt;3)-beta-D-Gal-(1-&gt;3)-[alpha-Neu5Ac-(2-&gt;6)]-D-GlcNAc derivative + CMP + H(+). The enzyme catalyses a ganglioside GM1b + CMP-N-acetyl-beta-neuraminate = a ganglioside GD1alpha + CMP + H(+). The catalysed reaction is a ganglioside GM1b (d18:1(4E)) + CMP-N-acetyl-beta-neuraminate = a ganglioside GD1alpha (d18:1(4E)) + CMP + H(+). It catalyses the reaction a globoside MSGG + CMP-N-acetyl-beta-neuraminate = a globoside DSGG + CMP + H(+). It carries out the reaction 3-O-[alpha-Neu5Ac-(2-&gt;3)-beta-D-Gal-(1-&gt;3)-alpha-D-GalNAc]-L-Ser-[protein] + CMP-N-acetyl-beta-neuraminate = a 3-O-{alpha-Neu5Ac-(2-&gt;3)-beta-D-Gal-(1-&gt;3)-[alpha-Neu5Ac-(2-&gt;6)]-alpha-D-GalNAc}-L-seryl-[protein] + CMP + H(+). The enzyme catalyses 3-O-[alpha-Neu5Ac-(2-&gt;3)-beta-D-Gal-(1-&gt;3)-alpha-D-GalNAc]-L-Thr-[protein] + CMP-N-acetyl-beta-neuraminate = a 3-O-{alpha-Neu5Ac-(2-&gt;3)-beta-D-Gal-(1-&gt;3)-[alpha-Neu5Ac-(2-&gt;6)]-alpha-D-GalNAc}-L-threonyl-[protein] + CMP + H(+). It functions in the pathway protein modification; protein glycosylation. Its pathway is glycolipid biosynthesis. In terms of biological role, transfers the sialyl group (N-acetyl-alpha-neuraminyl or NeuAc) from CMP-NeuAc to the GalNAc residue on the NeuAc-alpha-2,3-Gal-beta-1,3-GalNAc sequence of glycoproteins and glycolipids forming an alpha-2,6-linkage. Produces branched type disialyl structures by transfer of a sialyl group onto a GalNAc residue inside the backbone core chains. ST6GalNAcIII prefers glycolipids to glycoproteins, predominantly catalyzing the biosynthesis of ganglioside GD1alpha from GM1b. GD1alpha is a critical molecule in the communication and interaction between neuronal cells and their supportive cells, particularly in brain tissues, and functions as an adhesion molecule in the process of metastasis. Sialylation of glycoproteins or glycosphingolipids is very important in tumor development, neuronal development, nerve repair, immunological processes and regulation of hormone sensitivity. This is Alpha-N-acetylgalactosaminide alpha-2,6-sialyltransferase 3 (St6galnac3) from Rattus norvegicus (Rat).